The sequence spans 54 residues: uncharacterized protein (54 aa).

The protein to B.subtilis XkdX.

This is an uncharacterized protein from Bacillus subtilis (strain 168).